The chain runs to 121 residues: Flagellar protein FliT (121 aa).

The segment at methionine 1–leucine 50 is required for homodimerization. The fliD binding stretch occupies residues methionine 60–valine 98.

Belongs to the FliT family. As to quaternary structure, homodimer. Interacts with FliD and FlhC.

The protein localises to the cytoplasm. The protein resides in the cytosol. In terms of biological role, dual-function protein that regulates the transcription of class 2 flagellar operons and that also acts as an export chaperone for the filament-capping protein FliD. As a transcriptional regulator, acts as an anti-FlhDC factor; it directly binds FlhC, thus inhibiting the binding of the FlhC/FlhD complex to class 2 promoters, resulting in decreased expression of class 2 flagellar operons. As a chaperone, effects FliD transition to the membrane by preventing its premature polymerization, and by directing it to the export apparatus. This is Flagellar protein FliT from Escherichia coli O17:K52:H18 (strain UMN026 / ExPEC).